The chain runs to 489 residues: Betaine aldehyde dehydrogenase (489 aa).

T26 and D93 together coordinate K(+). Residue 150–152 (GAW) participates in NAD(+) binding. The Charge relay system role is filled by K162. 176–179 (KPSE) serves as a coordination point for NAD(+). V180 lines the K(+) pocket. 229–232 (GVET) is a binding site for NAD(+). L245 contacts K(+). E251 acts as the Proton acceptor in catalysis. 3 residues coordinate NAD(+): G253, C285, and E386. C285 functions as the Nucleophile in the catalytic mechanism. Residue C285 is modified to Cysteine sulfenic acid (-SOH). 2 residues coordinate K(+): K456 and G459. E463 serves as the catalytic Charge relay system.

Belongs to the aldehyde dehydrogenase family. Dimer of dimers. Requires K(+) as cofactor.

It catalyses the reaction betaine aldehyde + NAD(+) + H2O = glycine betaine + NADH + 2 H(+). It participates in amine and polyamine biosynthesis; betaine biosynthesis via choline pathway; betaine from betaine aldehyde: step 1/1. In terms of biological role, involved in the biosynthesis of the osmoprotectant glycine betaine. Catalyzes the irreversible oxidation of betaine aldehyde to the corresponding acid. The sequence is that of Betaine aldehyde dehydrogenase from Burkholderia orbicola (strain MC0-3).